The chain runs to 1522 residues: Dicer-like protein 1 (1522 aa).

Acidic residues predominate over residues 1–12 (MTWAGDVEEQDD). Residues 1-37 (MTWAGDVEEQDDYFSCSDVSTSGDRRKRAPQTVTQEE) form a disordered region. The 183-residue stretch at 76–258 (LFLRAKMQNT…EHVREAAREL (183 aa)) folds into the Helicase ATP-binding domain. 89–96 (LDTGTGKT) lines the ATP pocket. The DEAH box motif lies at 202–205 (DEAH). A Helicase C-terminal domain is found at 408–576 (WLNLYYERTT…DVEQEKAELI (169 aa)). One can recognise a Dicer dsRNA-binding fold domain in the interval 600–700 (SLSILSHFVA…LPTISKYLPA (101 aa)). Residues 859-980 (PFWKWSPQSR…ICPEPLHISN (122 aa)) enclose the PAZ domain. RNase III domains are found at residues 995–1166 (IIHR…MQHH) and 1222–1373 (AHKI…VDSE). Mg(2+)-binding residues include Glu-1262, Asp-1359, and Glu-1362. Positions 1409-1478 (TRLSRLLSIN…SHAALEKLEG (70 aa)) constitute a DRBM domain. Residues Cys-1421, His-1449, Cys-1490, and Cys-1492 each contribute to the Zn(2+) site.

The protein belongs to the helicase family. Dicer subfamily. Requires Mg(2+) as cofactor. Mn(2+) serves as cofactor.

In terms of biological role, dicer-like endonuclease involved in cleaving double-stranded RNA in the RNA interference (RNAi) pathway. Produces 21 to 25 bp dsRNAs (siRNAs) which target the selective destruction of homologous RNAs leading to sequence-specific suppression of gene expression, called post-transcriptional gene silencing (PTGS). Part of a broad host defense response against viral infection and transposons. This is Dicer-like protein 1 (DCL1) from Phaeosphaeria nodorum (strain SN15 / ATCC MYA-4574 / FGSC 10173) (Glume blotch fungus).